The chain runs to 486 residues: Histidine--tRNA ligase, chloroplastic/mitochondrial (486 aa).

The protein belongs to the class-II aminoacyl-tRNA synthetase family.

Its subcellular location is the plastid. It localises to the chloroplast. The protein resides in the mitochondrion. The enzyme catalyses tRNA(His) + L-histidine + ATP = L-histidyl-tRNA(His) + AMP + diphosphate + H(+). The protein is Histidine--tRNA ligase, chloroplastic/mitochondrial of Arabidopsis thaliana (Mouse-ear cress).